A 227-amino-acid polypeptide reads, in one-letter code: Class I hydrophobin A (227 aa).

The signal sequence occupies residues 1–18 (MQFSLSAIVLGLAATVYA). Residue Asn-50 is glycosylated (N-linked (GlcNAc...) asparagine). Cystine bridges form between Cys-60/Cys-138, Cys-68/Cys-132, and Cys-69/Cys-109.

It belongs to the fungal hydrophobin family.

Its subcellular location is the secreted. It localises to the cell wall. Its function is as follows. Aerial growth, conidiation, and dispersal of filamentous fungi in the environment rely upon a capability of their secreting small amphipathic proteins called hydrophobins (HPBs) with low sequence identity. Class I can self-assemble into an outermost layer of rodlet bundles on aerial cell surfaces, conferring cellular hydrophobicity that supports fungal growth, development and dispersal; whereas Class II form highly ordered films at water-air interfaces through intermolecular interactions but contribute nothing to the rodlet structure. In P.expansum, hydrophobins contribute to germination, tolerance to cold stress and mycotoxins patulin and citrinin production. HfbA and HfbB are essential for fungal surface hydrophobicity and HfbA mediates air and water dispersal. This chain is Class I hydrophobin A, found in Penicillium expansum (Blue mold rot fungus).